The sequence spans 278 residues: MALKTFKPVTPSLRQLVLVDRRELYKGKPVKALTEGKSSSGGRNNLGRITVRFRGGGHKRVLRNVDFKRRDQLGVAATVERIEYDPNRTAFIALINFPDGKQSYILAPQRLQPGDKVVAGESVDIKPGNAGPVGSMPVGTIVHNVELKIGKGGAIARSAGNYAQIVGRDQGYVTLRLNSGEQRLVHGQCFASVGAVSNPDHMNISLGKAGRNRWLGKRPHNRGVAMNPVDHPHGGGEGRTSGGRNPVTPWGVPTKGKKTRSNKRTDVFILSSRHNRKK.

Positions 222-264 (RGVAMNPVDHPHGGGEGRTSGGRNPVTPWGVPTKGKKTRSNKR) are disordered.

It belongs to the universal ribosomal protein uL2 family. Part of the 50S ribosomal subunit. Forms a bridge to the 30S subunit in the 70S ribosome.

Functionally, one of the primary rRNA binding proteins. Required for association of the 30S and 50S subunits to form the 70S ribosome, for tRNA binding and peptide bond formation. It has been suggested to have peptidyltransferase activity; this is somewhat controversial. Makes several contacts with the 16S rRNA in the 70S ribosome. In Methylobacterium radiotolerans (strain ATCC 27329 / DSM 1819 / JCM 2831 / NBRC 15690 / NCIMB 10815 / 0-1), this protein is Large ribosomal subunit protein uL2.